The primary structure comprises 454 residues: Chromosomal replication initiator protein DnaA (454 aa).

The interval 1–79 (MSLCLWKQCL…NSPLIKFEIY (79 aa)) is domain I, interacts with DnaA modulators. The interval 79–117 (YQIYKENKLKKNIENNNNNKNEKLIWSNIPKFKNLSYRS) is domain II. The segment at 118 to 334 (NINKRYNFQN…GALNRVILNS (217 aa)) is domain III, AAA+ region. Residues glycine 162, glycine 164, lysine 165, and threonine 166 each coordinate ATP. The tract at residues 335–454 (RFTHRAITVD…FLNLIRTLSK (120 aa)) is domain IV, binds dsDNA.

Belongs to the DnaA family. In terms of assembly, oligomerizes as a right-handed, spiral filament on DNA at oriC.

The protein resides in the cytoplasm. In terms of biological role, plays an essential role in the initiation and regulation of chromosomal replication. ATP-DnaA binds to the origin of replication (oriC) to initiate formation of the DNA replication initiation complex once per cell cycle. Binds the DnaA box (a 9 base pair repeat at the origin) and separates the double-stranded (ds)DNA. Forms a right-handed helical filament on oriC DNA; dsDNA binds to the exterior of the filament while single-stranded (ss)DNA is stabiized in the filament's interior. The ATP-DnaA-oriC complex binds and stabilizes one strand of the AT-rich DNA unwinding element (DUE), permitting loading of DNA polymerase. After initiation quickly degrades to an ADP-DnaA complex that is not apt for DNA replication. Binds acidic phospholipids. The polypeptide is Chromosomal replication initiator protein DnaA (Buchnera aphidicola subsp. Acyrthosiphon pisum (strain 5A)).